The chain runs to 178 residues: ATP synthase subunit delta (178 aa).

This sequence belongs to the ATPase delta chain family. As to quaternary structure, F-type ATPases have 2 components, F(1) - the catalytic core - and F(0) - the membrane proton channel. F(1) has five subunits: alpha(3), beta(3), gamma(1), delta(1), epsilon(1). F(0) has three main subunits: a(1), b(2) and c(10-14). The alpha and beta chains form an alternating ring which encloses part of the gamma chain. F(1) is attached to F(0) by a central stalk formed by the gamma and epsilon chains, while a peripheral stalk is formed by the delta and b chains.

The protein resides in the cell membrane. F(1)F(0) ATP synthase produces ATP from ADP in the presence of a proton or sodium gradient. F-type ATPases consist of two structural domains, F(1) containing the extramembraneous catalytic core and F(0) containing the membrane proton channel, linked together by a central stalk and a peripheral stalk. During catalysis, ATP synthesis in the catalytic domain of F(1) is coupled via a rotary mechanism of the central stalk subunits to proton translocation. In terms of biological role, this protein is part of the stalk that links CF(0) to CF(1). It either transmits conformational changes from CF(0) to CF(1) or is implicated in proton conduction. The sequence is that of ATP synthase subunit delta from Streptococcus agalactiae serotype V (strain ATCC BAA-611 / 2603 V/R).